The following is a 231-amino-acid chain: Septum site-determining protein MinC (231 aa).

It belongs to the MinC family. In terms of assembly, interacts with MinD and FtsZ.

Cell division inhibitor that blocks the formation of polar Z ring septums. Rapidly oscillates between the poles of the cell to destabilize FtsZ filaments that have formed before they mature into polar Z rings. Prevents FtsZ polymerization. The polypeptide is Septum site-determining protein MinC (Shigella flexneri).